A 95-amino-acid polypeptide reads, in one-letter code: Aspartyl/glutamyl-tRNA(Asn/Gln) amidotransferase subunit C (95 aa).

This sequence belongs to the GatC family. Heterotrimer of A, B and C subunits.

It carries out the reaction L-glutamyl-tRNA(Gln) + L-glutamine + ATP + H2O = L-glutaminyl-tRNA(Gln) + L-glutamate + ADP + phosphate + H(+). The enzyme catalyses L-aspartyl-tRNA(Asn) + L-glutamine + ATP + H2O = L-asparaginyl-tRNA(Asn) + L-glutamate + ADP + phosphate + 2 H(+). Its function is as follows. Allows the formation of correctly charged Asn-tRNA(Asn) or Gln-tRNA(Gln) through the transamidation of misacylated Asp-tRNA(Asn) or Glu-tRNA(Gln) in organisms which lack either or both of asparaginyl-tRNA or glutaminyl-tRNA synthetases. The reaction takes place in the presence of glutamine and ATP through an activated phospho-Asp-tRNA(Asn) or phospho-Glu-tRNA(Gln). This chain is Aspartyl/glutamyl-tRNA(Asn/Gln) amidotransferase subunit C, found in Bradyrhizobium sp. (strain ORS 278).